The primary structure comprises 354 residues: MLEEKGIERRDFMKWAGAMTAMLSLPATFTPLTAKAAELADRLPVIWLHMAECTGCSESLLRTDGPGIDSLIFDYISLEYHETVMAAAGWQAEHNLEHAIEKYKGRYVLMVEGGIPAGSSEFYLTVGPHGTTGAEHARHASANAAAIFAIGSCSSFGGVQAARPNPTNAQPLSKVTNKPVINVPGCPPSEKNIVGNVLHFILFGTLPSVDAFNRPMWAYGLRIHDLCERRGRFDAGEFVQEFGDEGAKKGYCLYKVGCKGPYTFNNCSKLRFNQHTSWPVQAGHGCIGCSEPDFWDTMGPFEEPVANRLYATAFDGLGADKTADKIGITLLAATAVGVAAHAVLSMMVKDKENN.

Positions 1-36 form a signal peptide, tat-type signal; the sequence is MLEEKGIERRDFMKWAGAMTAMLSLPATFTPLTAKA. Cys53, Cys56, Cys153, Cys186, His224, Cys227, Cys252, and Cys258 together coordinate [4Fe-4S] cluster. Positions 267, 286, and 289 each coordinate [3Fe-4S] cluster.

It belongs to the [NiFe]/[NiFeSe] hydrogenase small subunit family. Heterodimer of a large and a small subunit. [4Fe-4S] cluster is required as a cofactor. The cofactor is [3Fe-4S] cluster. Post-translationally, predicted to be exported by the Tat system. The position of the signal peptide cleavage has been experimentally proven.

It localises to the cell membrane. It carries out the reaction H2 + a menaquinone = a menaquinol. The chain is Quinone-reactive Ni/Fe-hydrogenase small chain (hydA) from Wolinella succinogenes (strain ATCC 29543 / DSM 1740 / CCUG 13145 / JCM 31913 / LMG 7466 / NCTC 11488 / FDC 602W) (Vibrio succinogenes).